Reading from the N-terminus, the 380-residue chain is Cytochrome b (380 aa).

Helical transmembrane passes span 34-54 (FGSL…LLAM), 78-99 (WLIR…YLHI), 114-134 (WNTG…GYVL), and 179-199 (FFAL…VHLT). Heme b-binding residues include His84 and His98. Heme b is bound by residues His183 and His197. His202 contacts a ubiquinone. 4 helical membrane passes run 227 to 247 (LKDI…ALFS), 289 to 309 (LGGV…PFLH), 321 to 341 (LSQL…WVGS), and 348 to 368 (FIII…ILFP).

It belongs to the cytochrome b family. In terms of assembly, the cytochrome bc1 complex contains 11 subunits: 3 respiratory subunits (MT-CYB, CYC1 and UQCRFS1), 2 core proteins (UQCRC1 and UQCRC2) and 6 low-molecular weight proteins (UQCRH/QCR6, UQCRB/QCR7, UQCRQ/QCR8, UQCR10/QCR9, UQCR11/QCR10 and a cleavage product of UQCRFS1). This cytochrome bc1 complex then forms a dimer. The cofactor is heme b.

It is found in the mitochondrion inner membrane. Functionally, component of the ubiquinol-cytochrome c reductase complex (complex III or cytochrome b-c1 complex) that is part of the mitochondrial respiratory chain. The b-c1 complex mediates electron transfer from ubiquinol to cytochrome c. Contributes to the generation of a proton gradient across the mitochondrial membrane that is then used for ATP synthesis. This chain is Cytochrome b (MT-CYB), found in Procellaria westlandica (Westland petrel).